The primary structure comprises 174 residues: uncharacterized protein (174 aa).

The tract at residues 153-174 (RSGNHSAGNVHPASPMIKVQGG) is disordered.

This is an uncharacterized protein from Sinorhizobium fredii (strain NBRC 101917 / NGR234).